Consider the following 58-residue polypeptide: MLYWAAVFFIIAVIAAVLGFGGLVSASASIAQILFFIFLVLFVVSLIFGVVRRPGPPR.

Transmembrane regions (helical) follow at residues 4-24 (WAAV…GGLV) and 30-50 (IAQI…IFGV).

This sequence belongs to the UPF0391 family.

The protein localises to the cell membrane. The protein is UPF0391 membrane protein Plav_0056 of Parvibaculum lavamentivorans (strain DS-1 / DSM 13023 / NCIMB 13966).